The primary structure comprises 426 residues: Endothelin-1 receptor (426 aa).

The signal sequence occupies residues 1–20 (METFCLKVTFWVALVGYVIG). Over 21-79 (DHPESYSTNLSTPVDFTTFHGTELSFLVTTHRPTNLALPSNGSMHSYCPQQTKITSAFK) the chain is Extracellular. 2 N-linked (GlcNAc...) asparagine glycosylation sites follow: Asn29 and Asn61. A helical transmembrane segment spans residues 80 to 101 (YINTVISCTIFIVGMVGNATLL). Residues 102–111 (RIIYQNKCMR) lie on the Cytoplasmic side of the membrane. The helical transmembrane segment at 112 to 131 (NGPNALIASLALGDLIYVVI) threads the bilayer. Residues 132–158 (DLPINVFKLLAGRWPFDHNDFGVFLCK) lie on the Extracellular side of the membrane. Cys157 and Cys238 are joined by a disulfide. A helical membrane pass occupies residues 159 to 180 (LFPFLQKSSVGITVLNLCALSV). Over 181 to 204 (DRYRAVASWSRVQGIGIPLITAIE) the chain is Cytoplasmic. The chain crosses the membrane as a helical span at residues 205 to 228 (IVSIWILSFILAIPEAIGFVMVPF). The Extracellular segment spans residues 229–255 (EYKGEQHKTCMLNATSKFMEFYQDVKD). Asn241 is a glycosylation site (N-linked (GlcNAc...) asparagine). The helical transmembrane segment at 256–277 (WWLFGFYFCMPLVCTAIFYTLM) threads the bilayer. Topologically, residues 278-305 (TCEMLNRRNGSLRIALSEHLKQRREVAK) are cytoplasmic. A helical transmembrane segment spans residues 306–327 (TVFCLVVIFALCWFPLHLSRIL). Topologically, residues 328 to 346 (KKTVYDEMDKNRCELLSFL) are extracellular. The chain crosses the membrane as a helical span at residues 347-371 (RLMDYIGINLATMNSCINPIALYFV). The Cytoplasmic segment spans residues 372-426 (SKKFKNCFQSCLCCCCYQSKSLMTSVPMNGTSIQWKNHEQNNHNTERSSHKDSIN). The residue at position 424 (Ser424) is a Phosphoserine.

This sequence belongs to the G-protein coupled receptor 1 family. Endothelin receptor subfamily. EDNRA sub-subfamily. Interacts with HDAC7 and KAT5.

It is found in the cell membrane. Receptor for endothelin-1. Mediates its action by association with G proteins that activate a phosphatidylinositol-calcium second messenger system. The rank order of binding affinities for ET-A is: ET1 &gt; ET2 &gt;&gt; ET3. The sequence is that of Endothelin-1 receptor from Canis lupus familiaris (Dog).